Here is a 177-residue protein sequence, read N- to C-terminus: Late embryogenesis abundant protein 1 (177 aa).

A disordered region spans residues 1 to 177 (MASHDQSYKA…DKDHFPTNRH (177 aa)). The segment covering 28–39 (IEDKAQAAKEKA) has biased composition (basic and acidic residues). Residues 40-89 (QQAAQTAKDKTSQTAQAAKEKTQQTAQAAKEKTQQTAQAAKDETQQTAQA) are compositionally biased toward low complexity. 4 consecutive repeat copies span residues 53 to 63 (TAQAAKEKTQQ), 64 to 74 (TAQAAKEKTQQ), 75 to 85 (TAQAAKDETQQ), and 86 to 96 (TAQAAKDKTQQ). The tract at residues 53-96 (TAQAAKEKTQQTAQAAKEKTQQTAQAAKDETQQTAQAAKDKTQQ) is 4 X 11 AA approximate tandem repeats of T-A-Q-A-A-K-E-K-T-Q-Q. Over residues 90-117 (AKDKTQQTTEATKEKAQDTTGRAREKGS) the composition is skewed to basic and acidic residues. Residues 119–142 (MGQSTKETAQSGKDNSAGFLQQTG) are compositionally biased toward polar residues. Positions 164-177 (NDDKDKDHFPTNRH) are enriched in basic and acidic residues.

The protein belongs to the LEA type 4 family. In terms of tissue distribution, highest expression is found in seeds. No expression detected in adult tissues.

The sequence is that of Late embryogenesis abundant protein 1 from Cicer arietinum (Chickpea).